The chain runs to 126 residues: C2H2-type zinc-finger transcription factor M5 (126 aa).

Disordered stretches follow at residues 17–52 and 103–126; these read AQPD…NDNR and EKKS…RVKD. A compositionally biased stretch (polar residues) spans 38 to 48; it reads SNGSSSGTATD. The C2H2-type 1; degenerate zinc-finger motif lies at 51-76; it reads NRCWDHGCNGKKFLNHSNLVRHRREN. The C2H2-type 2; degenerate zinc-finger motif lies at 83–115; sequence FTCPMCGAYFSRSTARNQHLEKKSCNRVRRYSN. Over residues 115–126 the composition is skewed to basic and acidic residues; sequence NGRERPRPRVKD.

The protein belongs to the GLI C2H2-type zinc-finger protein family.

The protein resides in the nucleus. Functionally, transcription factor that probably regulates the expression of the gene cluster that mediates the biosynthesis of squalestatin S1 (SQS1, also known as zaragozic acid A), a heavily oxidized fungal polyketide that offers potent cholesterol lowering activity by targeting squalene synthase (SS). The protein is C2H2-type zinc-finger transcription factor M5 of Phoma sp. (strain ATCC 20986 / MF5453).